We begin with the raw amino-acid sequence, 165 residues long: Ubiquitin-fold modifier-conjugating enzyme 1 (165 aa).

C117 acts as the Glycyl thioester intermediate in catalysis.

This sequence belongs to the ubiquitin-conjugating enzyme family. UFC1 subfamily.

Its function is as follows. E2-like enzyme which forms an intermediate with UFM1 via a thioester linkage. This is Ubiquitin-fold modifier-conjugating enzyme 1 from Brugia malayi (Filarial nematode worm).